Here is a 198-residue protein sequence, read N- to C-terminus: MYNIKFLDLLNSNLKPNPQWIFKDPHPILREVTQDIEGNELSKDDIYYLKKMVRYIDVCYHNQAKKYKIRSGIAIAANQVGWNKRATYIHFNDEAKEHHYLLINPHIIKRSSEIAYLNPGEGCLSVDDDRSGYVIRNKKVHVKAYDLISEQFIDQEFSGIIAICIQHEIGHLDAGLYYDNINQQQPFYADPSWTKIGR.

Fe cation-binding residues include Cys-123 and His-167. The active site involves Glu-168. Residue His-171 coordinates Fe cation.

Belongs to the polypeptide deformylase family. Fe(2+) serves as cofactor.

It carries out the reaction N-terminal N-formyl-L-methionyl-[peptide] + H2O = N-terminal L-methionyl-[peptide] + formate. Removes the formyl group from the N-terminal Met of newly synthesized proteins. Requires at least a dipeptide for an efficient rate of reaction. N-terminal L-methionine is a prerequisite for activity but the enzyme has broad specificity at other positions. This chain is Peptide deformylase, found in Ureaplasma parvum serovar 3 (strain ATCC 27815 / 27 / NCTC 11736).